The primary structure comprises 281 residues: Large ribosomal subunit protein uL2 (281 aa).

The interval 222–281 (TVRGSAMNPNDHPHGGGEGRQPIGRKSPMTPWGKRALGVKTRATKKASNQFIIRRRKETK) is disordered.

Belongs to the universal ribosomal protein uL2 family. In terms of assembly, part of the 50S ribosomal subunit. Forms a bridge to the 30S subunit in the 70S ribosome.

Its function is as follows. One of the primary rRNA binding proteins. Required for association of the 30S and 50S subunits to form the 70S ribosome, for tRNA binding and peptide bond formation. It has been suggested to have peptidyltransferase activity; this is somewhat controversial. Makes several contacts with the 16S rRNA in the 70S ribosome. The sequence is that of Large ribosomal subunit protein uL2 from Metamycoplasma hominis (strain ATCC 23114 / DSM 25592 / NBRC 14850 / NCTC 10111 / PG21) (Mycoplasma hominis).